We begin with the raw amino-acid sequence, 628 residues long: Kelch-like protein diablo (628 aa).

The disordered stretch occupies residues 1-56; sequence MGDLPGSTGGGSGPAAAGNASGNSSSAGNTGLGVAGTTGVDRPPSPARLSHTSEKH. A compositionally biased stretch (low complexity) spans 14 to 29; the sequence is PAAAGNASGNSSSAGN. A BTB domain is found at 74 to 141; sequence CDVVLNVGGR…CYTAHIIVEE (68 aa). Positions 176-278 constitute a BACK domain; the sequence is CLGIRAFADT…SPKFLVGTVG (103 aa). Kelch repeat units lie at residues 325-371, 373-419, 420-466, 468-513, 515-560, and 561-607; these read VLFA…VLND, LYAV…VLDG, FLYA…VLGG, LYAI…VFNN, IYAV…VVNG, and QLYA…VMRA.

Its pathway is protein modification; protein ubiquitination. Probable substrate-specific adapter of an E3 ubiquitin-protein ligase complex which mediates the ubiquitination and subsequent proteasomal degradation of target proteins. May have a role in synapse differentiation and growth. This Drosophila persimilis (Fruit fly) protein is Kelch-like protein diablo.